Reading from the N-terminus, the 257-residue chain is MLAKRIVPCLDVKDGKVVKGVQFRNHAIVGDIVPLAARYAIEGADELVFYDISASAHGKVIDKSWVSRVAEQIDIPFCVAGGIKTLAQAREKLAFGADKISINSPALTDPDLISRLQDEFGRQCIVIGIDSFFDAASNSYKVKQFTGDEAATKDTQWYTQDWVEEVQKRGCGEIVLNVMNQDGVRGGYDIKQLSMVRSICDVPLIASGGAGTMAHFKDVFEQAKVDAALAASVFHKGIIDIGELKQYLHANNIAIRL.

Residues Asp11 and Asp130 contribute to the active site.

Belongs to the HisA/HisF family. Heterodimer of HisH and HisF.

It is found in the cytoplasm. The enzyme catalyses 5-[(5-phospho-1-deoxy-D-ribulos-1-ylimino)methylamino]-1-(5-phospho-beta-D-ribosyl)imidazole-4-carboxamide + L-glutamine = D-erythro-1-(imidazol-4-yl)glycerol 3-phosphate + 5-amino-1-(5-phospho-beta-D-ribosyl)imidazole-4-carboxamide + L-glutamate + H(+). The protein operates within amino-acid biosynthesis; L-histidine biosynthesis; L-histidine from 5-phospho-alpha-D-ribose 1-diphosphate: step 5/9. IGPS catalyzes the conversion of PRFAR and glutamine to IGP, AICAR and glutamate. The HisF subunit catalyzes the cyclization activity that produces IGP and AICAR from PRFAR using the ammonia provided by the HisH subunit. The sequence is that of Imidazole glycerol phosphate synthase subunit HisF from Shewanella denitrificans (strain OS217 / ATCC BAA-1090 / DSM 15013).